A 95-amino-acid polypeptide reads, in one-letter code: uncharacterized protein (95 aa).

The interval 46 to 68 is disordered; the sequence is GDRGTNGRTEAEHDGIPHSRKKV.

This is an uncharacterized protein from Schizosaccharomyces pombe (strain 972 / ATCC 24843) (Fission yeast).